Here is a 23-residue protein sequence, read N- to C-terminus: Basic phospholipase A2 Smb-N6 (23 aa).

Belongs to the phospholipase A2 family. Group II subfamily. Ca(2+) is required as a cofactor. Contains 7 disulfide bonds. Expressed by the venom gland.

The protein localises to the secreted. The enzyme catalyses a 1,2-diacyl-sn-glycero-3-phosphocholine + H2O = a 1-acyl-sn-glycero-3-phosphocholine + a fatty acid + H(+). Functionally, snake venom phospholipase A2 (PLA2) that shows myotoxic activities. PLA2 catalyzes the calcium-dependent hydrolysis of the 2-acyl groups in 3-sn-phosphoglycerides. The protein is Basic phospholipase A2 Smb-N6 of Sistrurus miliarius barbouri (Dusky pigmy rattlesnake).